Here is a 230-residue protein sequence, read N- to C-terminus: CRP-like protein Clp (230 aa).

18–139 is an a nucleoside 3',5'-cyclic phosphate binding site; the sequence is PSLTLDAGTI…APRILYAIGV (122 aa). The HTH crp-type domain maps to 158 to 230; it reads LDVTDRIVRT…GKTVVLYGTR (73 aa). A DNA-binding region (H-T-H motif) is located at residues 190-209; sequence RQELARLVGCSREMAGRVLK.

Homodimer.

It is found in the cytoplasm. With respect to regulation, allosterically inhibited by cyclic di-GMP (c-di-GMP), which binds to Clp and abolishes its ability to bind its target gene promoter. Global transcriptional regulator that regulates virulence factors production by activating or repressing the expression of a large set of genes in diffusible signal factor (DSF) pathway. The sequence is that of CRP-like protein Clp (clp) from Xanthomonas campestris pv. campestris (strain 8004).